A 514-amino-acid chain; its full sequence is Retron Vc95 probable ATPase (514 aa).

Positions 92-99 (GNNGSGKS) match the ATP-binding motif.

In terms of biological role, probable ATPase component of antiviral defense system retron Vc95, composed of a non-coding RNA (ncRNA), a reverse transcriptase (RT), this protein and a putative HNH endonuclease. Expression of retron Vc95 confers protection against bacteriophages T2, T4 and T6. At multiplicity of infection (MOI) of 0.02 cultures slow growth when infected with T4 but do not collapse, at MOI 2 cultures enter growth stasis. The sequence is that of Retron Vc95 probable ATPase from Vibrio cholerae serotype O1 biovar El Tor.